Consider the following 150-residue polypeptide: Ribosome maturation factor RimP (150 aa).

The protein belongs to the RimP family.

It is found in the cytoplasm. Its function is as follows. Required for maturation of 30S ribosomal subunits. This chain is Ribosome maturation factor RimP, found in Thermotoga maritima (strain ATCC 43589 / DSM 3109 / JCM 10099 / NBRC 100826 / MSB8).